The primary structure comprises 208 residues: Imidazoleglycerol-phosphate dehydratase (208 aa).

This sequence belongs to the imidazoleglycerol-phosphate dehydratase family.

The protein localises to the cytoplasm. It carries out the reaction D-erythro-1-(imidazol-4-yl)glycerol 3-phosphate = 3-(imidazol-4-yl)-2-oxopropyl phosphate + H2O. It participates in amino-acid biosynthesis; L-histidine biosynthesis; L-histidine from 5-phospho-alpha-D-ribose 1-diphosphate: step 6/9. This is Imidazoleglycerol-phosphate dehydratase from Hyphomonas neptunium (strain ATCC 15444).